Reading from the N-terminus, the 227-residue chain is MLCNLIHNIHKEGYIIIMISFLLSCIGFAISCSLGIIFLVASLLCIYFFRDPIRIVPEGDHLIISPADGIILNIEQVNSPIDNSTQVLCISIFLNVLNVHVNRIPVSGTIKATEYIPGRFISASLNKSSELNERQRIVIESNVSHHTIIVDQIAGLIARRIVCNAYEGQNVNSGERFGIIRFGSRVNIYLPLNIHISAFKGQTVIGGETILAYLEDYPHKQLTAKFI.

S184 (schiff-base intermediate with substrate; via pyruvic acid) is an active-site residue. S184 carries the post-translational modification Pyruvic acid (Ser); by autocatalysis.

Belongs to the phosphatidylserine decarboxylase family. PSD-A subfamily. In terms of assembly, heterodimer of a large membrane-associated beta subunit and a small pyruvoyl-containing alpha subunit. Pyruvate serves as cofactor. Post-translationally, is synthesized initially as an inactive proenzyme. Formation of the active enzyme involves a self-maturation process in which the active site pyruvoyl group is generated from an internal serine residue via an autocatalytic post-translational modification. Two non-identical subunits are generated from the proenzyme in this reaction, and the pyruvate is formed at the N-terminus of the alpha chain, which is derived from the carboxyl end of the proenzyme. The post-translation cleavage follows an unusual pathway, termed non-hydrolytic serinolysis, in which the side chain hydroxyl group of the serine supplies its oxygen atom to form the C-terminus of the beta chain, while the remainder of the serine residue undergoes an oxidative deamination to produce ammonia and the pyruvoyl prosthetic group on the alpha chain.

It is found in the cell membrane. It catalyses the reaction a 1,2-diacyl-sn-glycero-3-phospho-L-serine + H(+) = a 1,2-diacyl-sn-glycero-3-phosphoethanolamine + CO2. It functions in the pathway phospholipid metabolism; phosphatidylethanolamine biosynthesis; phosphatidylethanolamine from CDP-diacylglycerol: step 2/2. Catalyzes the formation of phosphatidylethanolamine (PtdEtn) from phosphatidylserine (PtdSer). The chain is Phosphatidylserine decarboxylase proenzyme from Ehrlichia ruminantium (strain Gardel).